Here is a 416-residue protein sequence, read N- to C-terminus: 4-hydroxy-3-methylbut-2-en-1-yl diphosphate synthase (flavodoxin) (416 aa).

[4Fe-4S] cluster is bound by residues cysteine 304, cysteine 307, cysteine 350, and glutamate 357.

The protein belongs to the IspG family. Requires [4Fe-4S] cluster as cofactor.

The catalysed reaction is (2E)-4-hydroxy-3-methylbut-2-enyl diphosphate + oxidized [flavodoxin] + H2O + 2 H(+) = 2-C-methyl-D-erythritol 2,4-cyclic diphosphate + reduced [flavodoxin]. It functions in the pathway isoprenoid biosynthesis; isopentenyl diphosphate biosynthesis via DXP pathway; isopentenyl diphosphate from 1-deoxy-D-xylulose 5-phosphate: step 5/6. Converts 2C-methyl-D-erythritol 2,4-cyclodiphosphate (ME-2,4cPP) into 1-hydroxy-2-methyl-2-(E)-butenyl 4-diphosphate. The protein is 4-hydroxy-3-methylbut-2-en-1-yl diphosphate synthase (flavodoxin) of Rhizobium etli (strain CIAT 652).